The sequence spans 336 residues: MAKKIRIIDSTLRDGMHAVSHQFTPEEMAEIAAGLDAAGIDTIEVSHGDGLGGSSYNYGFAAAKDEDYLKAVSQVLKNSKLGVLLLPGIGTAHDLEMAAKFGAKVVRVATHCTEADIGEQHIKIAKELGMEAIGFLMMSHMVPPEKLVEQAKLFESYGADAVYITDSAGAMTPYDVKVRIEAVKAAVSVPVGFHAHNNLGLAIGNTLAAIEAGATYVDGTARGLGAGAGNSQTEILVAVLAKLGYETGVDLYKIMDVAEEVVAPKMRRPQIVDKAALSLGYAGVYGSFLLHAMRAAEKFKVDVRDILIELGRLKTVGGQEDMIVDVAYELSKANKQ.

Residues 5–255 enclose the Pyruvate carboxyltransferase domain; sequence IRIIDSTLRD…ETGVDLYKIM (251 aa). 13 to 14 lines the substrate pocket; it reads RD. Asp-14 provides a ligand contact to Mn(2+). The active-site Proton acceptor is the His-17. Residues Ser-167 and His-194 each coordinate substrate. Mn(2+) contacts are provided by His-194 and His-196. Tyr-285 lines the substrate pocket.

The protein belongs to the 4-hydroxy-2-oxovalerate aldolase family.

It catalyses the reaction (S)-4-hydroxy-2-oxopentanoate = acetaldehyde + pyruvate. The protein is 4-hydroxy-2-oxovalerate aldolase (mhpE) of Carboxydothermus hydrogenoformans (strain ATCC BAA-161 / DSM 6008 / Z-2901).